The following is a 377-amino-acid chain: uncharacterized protein (377 aa).

7 helical membrane-spanning segments follow: residues Trp21–Phe41, Leu66–Gly86, Ile163–Leu183, Ala197–Ile217, Phe236–Phe256, Val292–Leu312, and Ile339–Phe359.

The protein localises to the cell membrane. This is an uncharacterized protein from Mycoplasma pneumoniae (strain ATCC 29342 / M129 / Subtype 1) (Mycoplasmoides pneumoniae).